Consider the following 150-residue polypeptide: Large-conductance mechanosensitive channel (150 aa).

The next 2 helical transmembrane spans lie at 14-34 and 81-101; these read VIDL…VTSF and GVFL…FLVV.

It belongs to the MscL family. In terms of assembly, homopentamer.

It localises to the cell membrane. Channel that opens in response to stretch forces in the membrane lipid bilayer. May participate in the regulation of osmotic pressure changes within the cell. This Syntrophomonas wolfei subsp. wolfei (strain DSM 2245B / Goettingen) protein is Large-conductance mechanosensitive channel.